A 456-amino-acid chain; its full sequence is E3 ubiquitin-protein ligase RNF25 (456 aa).

One can recognise an RWD domain in the interval 18 to 127 (SEVEVLESIY…EKGKEILTDN (110 aa)). Residues C134, C137, C152, H154, H157, C160, C195, and C198 each coordinate Zn(2+). The segment at 134–199 (CVICLYGFQE…AVGVQCPVCR (66 aa)) adopts an RING-type zinc-finger fold. Residues 269-456 (LEPESAVDVS…PLGLESEEGS (188 aa)) form a disordered region. Over residues 288–332 (SAEQSTSLADQSTLPTSLPMTTQYTYEKTSGAGPNQQRPGETQKS) the composition is skewed to polar residues. 2 stretches are compositionally biased toward basic and acidic residues: residues 364 to 388 (SEIH…EPRN) and 410 to 421 (RTRDCARWERSK).

The protein belongs to the RNF25 family. Interacts with UBE2D2, and may also interact with UBE2E1 and UBE2E3. Interacts with RELA/p65. Ubiquitinated; autoubiquitinated. In terms of tissue distribution, ubiquitous.

The protein localises to the cytoplasm. It catalyses the reaction S-ubiquitinyl-[E2 ubiquitin-conjugating enzyme]-L-cysteine + [acceptor protein]-L-lysine = [E2 ubiquitin-conjugating enzyme]-L-cysteine + N(6)-ubiquitinyl-[acceptor protein]-L-lysine.. It functions in the pathway protein modification; protein ubiquitination. In terms of biological role, E3 ubiquitin-protein ligase that plays a key role in the RNF14-RNF25 translation quality control pathway, a pathway that takes place when a ribosome has stalled during translation, and which promotes ubiquitination and degradation of translation factors on stalled ribosomes. Catalyzes ubiquitination of RPS27A in response to ribosome collisions, promoting activation of RNF14. RNF25 catalyzes ubiquitination of other ribosomal proteins on stalled ribosomes, such as RPL0, RPL1, RPL12, RPS13 and RPS17. Also involved in ubiquitination and degradation of stalled ETF1/eRF1. Independently of its function in the response to stalled ribosomes, mediates ubiquitination and subsequent proteasomal degradation of NKD2. May also stimulate transcription mediated by NF-kappa-B via its interaction with RELA/p65. The polypeptide is E3 ubiquitin-protein ligase RNF25 (Mus musculus (Mouse)).